The sequence spans 699 residues: D-(-)-3-hydroxybutyrate oligomer hydrolase (699 aa).

Residues 1 to 19 (MNPSLCIAVAFACPLSALA) form the signal peptide. S303 acts as the Charge relay system in catalysis.

The protein belongs to the D-(-)-3-hydroxybutyrate oligomer hydrolase family.

The protein resides in the secreted. The enzyme catalyses (3R)-hydroxybutanoate dimer + H2O = 2 (R)-3-hydroxybutanoate + H(+). The protein operates within lipid metabolism; butanoate metabolism. In terms of biological role, participates in the degradation of poly-3-hydroxybutyrate (PHB). It works downstream of poly(3-hydroxybutyrate) depolymerase, hydrolyzing D(-)-3-hydroxybutyrate oligomers of various length (3HB-oligomers) into 3HB-monomers. The polypeptide is D-(-)-3-hydroxybutyrate oligomer hydrolase (Azoarcus sp. (strain BH72)).